Here is a 719-residue protein sequence, read N- to C-terminus: Polyphosphate kinase (719 aa).

Asn47 serves as a coordination point for ATP. 2 residues coordinate Mg(2+): Arg377 and Arg407. The active-site Phosphohistidine intermediate is the His437. ATP contacts are provided by Tyr470, Arg566, and His594.

It belongs to the polyphosphate kinase 1 (PPK1) family. Mg(2+) serves as cofactor. Post-translationally, an intermediate of this reaction is the autophosphorylated ppk in which a phosphate is covalently linked to a histidine residue through a N-P bond.

It carries out the reaction [phosphate](n) + ATP = [phosphate](n+1) + ADP. Its function is as follows. Catalyzes the reversible transfer of the terminal phosphate of ATP to form a long-chain polyphosphate (polyP). The chain is Polyphosphate kinase from Exiguobacterium sibiricum (strain DSM 17290 / CCUG 55495 / CIP 109462 / JCM 13490 / 255-15).